Reading from the N-terminus, the 517-residue chain is Acyltransferase AFT15-1 (517 aa).

The active-site Proton acceptor is histidine 180.

It belongs to the plant acyltransferase family.

It functions in the pathway mycotoxin biosynthesis. In terms of biological role, acyltransferase; part of the gene clusters that mediate the biosynthesis of the host-selective toxins (HSTs) AF-toxins responsible for Alternaria black spot of strawberry disease by the strawberry pathotype. AF-toxin I and III are valine derivatives of 2,3-dyhydroxy-isovaleric acid and 2-hydroxy-isovaleric acid respectively, while AF II is an isoleucine derivative of 2-hydroxy-valeric acid. These derivatives are bound to a 9,10-epoxy-8-hydroxy-9-methyl-decatrienoic acid (EDA) moiety. On cellular level, AF-toxins affect plasma membrane of susceptible cells and cause a sudden increase in loss of K(+) after a few minutes of toxin treatment. The aldo-keto reductase AFTS1 catalyzes the conversion of 2-keto-isovaleric acid (2-KIV) to 2-hydroxy-isovaleric acid (2-HIV) by reduction of its ketone to an alcohol. The acyl-CoA ligase AFT1, the hydrolase AFT2 and the enoyl-CoA hydratases AFT3 and AFT6, but also the polyketide synthase AFT9, the acyl-CoA dehydrogenase AFT10, the cytochrome P450 monooxygenase AFT11 and the oxidoreductase AFT12 are all involved in the biosynthesis of the AK-, AF- and ACT-toxin common EDA structural moiety. The exact function of each enzyme, and of additional enzymes identified within the AF-toxin clusters have still to be determined. The chain is Acyltransferase AFT15-1 (AFT15-1) from Alternaria alternata (Alternaria rot fungus).